A 235-amino-acid chain; its full sequence is Photosystem I assembly protein Ycf4 (235 aa).

2 helical membrane passes run 21–43 (NLCW…TSSY) and 63–85 (GIVM…CTIL).

It belongs to the Ycf4 family.

Its subcellular location is the plastid. The protein localises to the chloroplast thylakoid membrane. Functionally, seems to be required for the assembly of the photosystem I complex. The sequence is that of Photosystem I assembly protein Ycf4 from Amborella trichopoda.